A 427-amino-acid polypeptide reads, in one-letter code: Adenylosuccinate synthetase (427 aa).

GTP contacts are provided by residues 12-18 (GDEGKGK) and 40-42 (GHT). Asp13 serves as the catalytic Proton acceptor. Residues Asp13 and Gly40 each contribute to the Mg(2+) site. Residues 13-16 (DEGK), 38-41 (NAGH), Thr128, Arg142, Gln223, Thr238, and Arg302 each bind IMP. His41 serves as the catalytic Proton donor. Residue 298 to 304 (TTTGRAR) coordinates substrate. GTP is bound by residues Arg304, 330–332 (KLD), and 412–414 (AVG).

It belongs to the adenylosuccinate synthetase family. Homodimer. The cofactor is Mg(2+).

The protein resides in the cytoplasm. It catalyses the reaction IMP + L-aspartate + GTP = N(6)-(1,2-dicarboxyethyl)-AMP + GDP + phosphate + 2 H(+). The protein operates within purine metabolism; AMP biosynthesis via de novo pathway; AMP from IMP: step 1/2. Its function is as follows. Plays an important role in the de novo pathway of purine nucleotide biosynthesis. Catalyzes the first committed step in the biosynthesis of AMP from IMP. This chain is Adenylosuccinate synthetase, found in Desulfitobacterium hafniense (strain DSM 10664 / DCB-2).